A 354-amino-acid polypeptide reads, in one-letter code: Large ribosomal subunit protein uL10 (354 aa).

2 stretches are compositionally biased toward acidic residues: residues 286-296 (DEEALPEELQD) and 307-345 (AEAD…DGDG). Residues 286–354 (DEEALPEELQ…GGDALGDMFG (69 aa)) are disordered.

Belongs to the universal ribosomal protein uL10 family. Part of the 50S ribosomal subunit. Forms part of the ribosomal stalk which helps the ribosome interact with GTP-bound translation factors. Forms a heptameric L10(L12)2(L12)2(L12)2 complex, where L10 forms an elongated spine to which the L12 dimers bind in a sequential fashion.

Functionally, forms part of the ribosomal stalk, playing a central role in the interaction of the ribosome with GTP-bound translation factors. The protein is Large ribosomal subunit protein uL10 of Natronomonas pharaonis (strain ATCC 35678 / DSM 2160 / CIP 103997 / JCM 8858 / NBRC 14720 / NCIMB 2260 / Gabara) (Halobacterium pharaonis).